The following is a 165-amino-acid chain: Cyanate hydratase (165 aa).

Active-site residues include Arg-106, Glu-109, and Ser-132.

This sequence belongs to the cyanase family.

The catalysed reaction is cyanate + hydrogencarbonate + 3 H(+) = NH4(+) + 2 CO2. Functionally, catalyzes the reaction of cyanate with bicarbonate to produce ammonia and carbon dioxide. This is Cyanate hydratase from Laccaria bicolor (strain S238N-H82 / ATCC MYA-4686) (Bicoloured deceiver).